The sequence spans 356 residues: Peptide chain release factor 1 (356 aa).

Gln-233 bears the N5-methylglutamine mark.

Belongs to the prokaryotic/mitochondrial release factor family. In terms of processing, methylated by PrmC. Methylation increases the termination efficiency of RF1.

It localises to the cytoplasm. Its function is as follows. Peptide chain release factor 1 directs the termination of translation in response to the peptide chain termination codons UAG and UAA. The protein is Peptide chain release factor 1 of Symbiobacterium thermophilum (strain DSM 24528 / JCM 14929 / IAM 14863 / T).